The following is a 487-amino-acid chain: Glycogen synthase (487 aa).

Position 15 (lysine 15) interacts with ADP-alpha-D-glucose.

It belongs to the glycosyltransferase 1 family. Bacterial/plant glycogen synthase subfamily.

The enzyme catalyses [(1-&gt;4)-alpha-D-glucosyl](n) + ADP-alpha-D-glucose = [(1-&gt;4)-alpha-D-glucosyl](n+1) + ADP + H(+). It functions in the pathway glycan biosynthesis; glycogen biosynthesis. Functionally, synthesizes alpha-1,4-glucan chains using ADP-glucose. The sequence is that of Glycogen synthase from Leptothrix cholodnii (strain ATCC 51168 / LMG 8142 / SP-6) (Leptothrix discophora (strain SP-6)).